A 214-amino-acid polypeptide reads, in one-letter code: MSISTVDDLSFYSNVEPNQQRFTEVVKTFQTNFPGDDITFFARSPGRVNLIGDHIDYNFFPVLPMAIANDVIAAVNVNSTNEIIITNTDSKDFLKEVIALRNSQIDQEHHSWANYFKCALIVAKQYLEERGVTSLKGMKLTFNGNVPTGGGLSSSAAFCVASTLAIIRANGITDLTKQDLTRITVVSEHYVGVNTGGMDQCASVCGEPDKLLLI.

Arginine 47, aspartate 53, histidine 54, and aspartate 56 together coordinate alpha-D-galactose. ATP-binding residues include glycine 149, glycine 151, serine 153, and serine 154. Aspartate 199 lines the alpha-D-galactose pocket. The Proton acceptor role is filled by aspartate 199.

This sequence belongs to the GHMP kinase family. GalK subfamily.

The enzyme catalyses alpha-D-galactose + ATP = alpha-D-galactose 1-phosphate + ADP + H(+). It functions in the pathway carbohydrate metabolism; galactose metabolism. Functionally, galactokinase is a key enzyme in the galactose metabolism where it catalyzes the conversion of alpha-D-galactose to galactose 1-phosphate. Can also induce the transcription of the gal genes in response to the organism being challenged with galactose as the sole source of carbon. The sequence is that of Galactokinase from Candida maltosa (Yeast).